Here is a 1334-residue protein sequence, read N- to C-terminus: CRISPR-associated endonuclease Cas9 (1334 aa).

Asp10 (for RuvC-like nuclease domain) is an active-site residue. Positions 10, 765, and 769 each coordinate Mn(2+). In terms of domain architecture, HNH Cas9-type spans 773-924 (TGKGKNNSRP…DKARFIHRQL (152 aa)). The active-site Proton acceptor for HNH nuclease domain is the His843. Residue His986 participates in Mn(2+) binding.

It belongs to the CRISPR-associated protein Cas9 family. Subtype II-A subfamily. Monomer. Binds crRNA and tracrRNA. The cofactor is Mg(2+).

In terms of biological role, CRISPR (clustered regularly interspaced short palindromic repeat) is an adaptive immune system that provides protection against mobile genetic elements (viruses, transposable elements and conjugative plasmids). CRISPR clusters contain spacers, sequences complementary to antecedent mobile elements, and target invading nucleic acids. CRISPR clusters are transcribed and processed into CRISPR RNA (crRNA). In type II CRISPR systems correct processing of pre-crRNA requires a trans-encoded small RNA (tracrRNA), endogenous ribonuclease 3 (rnc) and this protein. The tracrRNA serves as a guide for ribonuclease 3-aided processing of pre-crRNA. Subsequently Cas9/crRNA/tracrRNA endonucleolytically cleaves linear or circular dsDNA target complementary to the spacer; Cas9 is inactive in the absence of the 2 guide RNAs (gRNA). Cas9 recognizes the protospacer adjacent motif (PAM) in the CRISPR repeat sequences to help distinguish self versus nonself, as targets within the bacterial CRISPR locus do not have PAMs. PAM recognition is also required for catalytic activity. This Listeria innocua serovar 6a (strain ATCC BAA-680 / CLIP 11262) protein is CRISPR-associated endonuclease Cas9.